The sequence spans 114 residues: Amphinase-3 (114 aa).

H15 (proton acceptor) is an active-site residue. The N-linked (GlcNAc...) asparagine glycan is linked to N25. Intrachain disulfides connect C26–C79, C41–C85, C59–C100, and C97–C114. 42-46 serves as a coordination point for substrate; the sequence is KPINT. Residues N67 and N91 are each glycosylated (N-linked (GlcNAc...) asparagine). H107 functions as the Proton donor in the catalytic mechanism.

This sequence belongs to the pancreatic ribonuclease family. Monomer. In terms of processing, there are at least five different forms arising from glycan heterogeneity.

The protein localises to the secreted. Functionally, endonuclease, hydrolyzes highly polymerized RNA, poly(U) and poly(C), and the dinucleotides CpA and UpA. More active towards rCA than rUA or rUG. Has cytotoxic activity against cultured human submaxillary gland carcinoma cells. The sequence is that of Amphinase-3 from Lithobates pipiens (Northern leopard frog).